The following is a 337-amino-acid chain: Probable RuBisCO transcriptional regulator (337 aa).

The 58-residue stretch at 6 to 63 folds into the HTH lysR-type domain; it reads FTLDQLRILKAIAVEGSFKRAADSLYVSQPAVSLQVQNLERQLDVPLFDRGGRRAQLT. Positions 23 to 42 form a DNA-binding region, H-T-H motif; that stretch reads FKRAADSLYVSQPAVSLQVQ.

Belongs to the LysR transcriptional regulatory family.

Trans-acting transcriptional regulator of RuBisCO genes (rbcL and rbcS) expression. This Trichormus variabilis (strain ATCC 29413 / PCC 7937) (Anabaena variabilis) protein is Probable RuBisCO transcriptional regulator (rbcR).